Reading from the N-terminus, the 212-residue chain is dITP/XTP pyrophosphatase (212 aa).

Residue 7-12 participates in substrate binding; sequence SNNAKK. E39 and D68 together coordinate Mg(2+). Residue D68 is the Proton acceptor of the active site. Residues S69, 165–168, K188, and 193–194 contribute to the substrate site; these read FGYD and HR.

This sequence belongs to the HAM1 NTPase family. As to quaternary structure, homodimer. Mg(2+) serves as cofactor.

It carries out the reaction XTP + H2O = XMP + diphosphate + H(+). The catalysed reaction is dITP + H2O = dIMP + diphosphate + H(+). The enzyme catalyses ITP + H2O = IMP + diphosphate + H(+). Its function is as follows. Pyrophosphatase that catalyzes the hydrolysis of nucleoside triphosphates to their monophosphate derivatives, with a high preference for the non-canonical purine nucleotides XTP (xanthosine triphosphate), dITP (deoxyinosine triphosphate) and ITP. Seems to function as a house-cleaning enzyme that removes non-canonical purine nucleotides from the nucleotide pool, thus preventing their incorporation into DNA/RNA and avoiding chromosomal lesions. This chain is dITP/XTP pyrophosphatase, found in Leptothrix cholodnii (strain ATCC 51168 / LMG 8142 / SP-6) (Leptothrix discophora (strain SP-6)).